Here is a 426-residue protein sequence, read N- to C-terminus: Melibiose/raffinose/stachyose-binding protein MelE (426 aa).

Positions 1–18 are cleaved as a signal peptide; sequence MKHTFVLFLSLILLVLPG. The N-palmitoyl cysteine moiety is linked to residue C19. The S-diacylglycerol cysteine moiety is linked to residue C19.

It belongs to the bacterial solute-binding protein 1 family. The complex is composed of two ATP-binding proteins (MsmX), two transmembrane proteins (MelC and MelD) and a solute-binding protein (MelE).

It localises to the cell membrane. Functionally, part of the ABC transporter complex MelEDC-MsmX involved in melibiose, raffinose and stachyose import. Binds melibiose, raffinose and stachyose. The protein is Melibiose/raffinose/stachyose-binding protein MelE of Bacillus subtilis (strain 168).